Reading from the N-terminus, the 126-residue chain is Small ribosomal subunit protein uS13 (126 aa).

The interval 92 to 126 (HRRGLPVRGQRTKTNARTRKGPRKTVAGKKKATRK) is disordered.

Belongs to the universal ribosomal protein uS13 family. As to quaternary structure, part of the 30S ribosomal subunit. Forms a loose heterodimer with protein S19. Forms two bridges to the 50S subunit in the 70S ribosome.

Its function is as follows. Located at the top of the head of the 30S subunit, it contacts several helices of the 16S rRNA. In the 70S ribosome it contacts the 23S rRNA (bridge B1a) and protein L5 of the 50S subunit (bridge B1b), connecting the 2 subunits; these bridges are implicated in subunit movement. Contacts the tRNAs in the A and P-sites. This chain is Small ribosomal subunit protein uS13, found in Deinococcus geothermalis (strain DSM 11300 / CIP 105573 / AG-3a).